The chain runs to 243 residues: NAD-dependent protein deacetylase (243 aa).

Residues 1 to 243 (MRNDLETLKH…VSVVKSLMTE (243 aa)) form the Deacetylase sirtuin-type domain. Residues Ala-24, Phe-35, Arg-36, Gln-105, Ile-107, Asp-108, and His-123 each contribute to the NAD(+) site. Phe-35 lines the nicotinamide pocket. Nicotinamide is bound by residues Ile-107 and Asp-108. The active-site Proton acceptor is His-123. Zn(2+)-binding residues include Cys-131, Cys-134, Cys-151, and Cys-154. NAD(+)-binding residues include Ser-192, Ser-193, Asn-215, and Asp-232.

It belongs to the sirtuin family. Class U subfamily. Requires Zn(2+) as cofactor.

The protein resides in the cytoplasm. It carries out the reaction N(6)-acetyl-L-lysyl-[protein] + NAD(+) + H2O = 2''-O-acetyl-ADP-D-ribose + nicotinamide + L-lysyl-[protein]. Functionally, NAD-dependent protein deacetylase which modulates the activities of several enzymes which are inactive in their acetylated form. The chain is NAD-dependent protein deacetylase from Staphylococcus aureus (strain Mu50 / ATCC 700699).